We begin with the raw amino-acid sequence, 484 residues long: Glycogen synthase (484 aa).

ADP-alpha-D-glucose is bound at residue Lys-21.

Belongs to the glycosyltransferase 1 family. Bacterial/plant glycogen synthase subfamily.

The enzyme catalyses [(1-&gt;4)-alpha-D-glucosyl](n) + ADP-alpha-D-glucose = [(1-&gt;4)-alpha-D-glucosyl](n+1) + ADP + H(+). It participates in glycan biosynthesis; glycogen biosynthesis. Functionally, synthesizes alpha-1,4-glucan chains using ADP-glucose. The sequence is that of Glycogen synthase from Pseudomonas syringae pv. tomato (strain ATCC BAA-871 / DC3000).